The sequence spans 170 residues: Centrin-2 (170 aa).

Residues 1–21 (MQRGALRGASPTARRRLVDRP) are disordered. 4 EF-hand domains span residues 26 to 61 (DEIE…LGFE), 62 to 97 (TKNP…KLGD), 99 to 134 (ESRE…LGET), and 135 to 170 (MSED…KTFP). Residues Asp39, Asp41, Ser43, Met45, and Glu50 each coordinate Ca(2+).

The protein belongs to the centrin family. In terms of assembly, monomer. Does not homooligomerize.

Its subcellular location is the cytoplasm. The protein resides in the cytoskeleton. The protein localises to the microtubule organizing center. It localises to the centrosome. Functionally, in tachyzoites, plays an essential role in microneme secretion that ensures parasite motility and attachment to, invasion of and egress from host cells. Also involved in the architecture of the peripheral annuli where it appears to regulate the localization of PAP2. In association with the myosin motor MyoJ, involved in the constriction of the basal complex at the end of daughter cell division in an actin-dependent manner; the basal complex is a cytoskeletal structure formed at the tachyzoite basal pole during daughter cell formation. May be involved in parasite replication. The protein is Centrin-2 of Toxoplasma gondii (strain ATCC 50611 / Me49).